The chain runs to 315 residues: MAKKQEIRPKNFSDFVGQNKLKKLLKVMISSAQVQNRPLDHILFYGNPGTGKTSLASIISNSLNSRIKYAQGNLLDKKTDILTLFASVEENDIIFVDEIHAINKNIEELLYSILEDFVVDIVIGVESNSKIMRLNLKPFTFIGATTQINRISKPLRDRFGLIGQISNYQVEDIEKIIKNNSKKLNIQIDEKATNLIALYSQNIPRLAINLLKRTKDFCIYEECQIIDYKLVNKTLKQLGIYENGLNESQVKYLRSLSETFYKKAVSLDLIVGFLSLQKETIISEIEPLLISNNLIVKTPRGRKITQKGISYLERI.

The segment at 1–168 (MAKKQEIRPK…FGLIGQISNY (168 aa)) is large ATPase domain (RuvB-L). Residues Ile-7, Arg-8, Gly-49, Lys-52, Thr-53, Ser-54, 115–117 (EDF), Arg-158, Tyr-168, and Arg-205 contribute to the ATP site. Residue Thr-53 participates in Mg(2+) binding. Positions 169–239 (QVEDIEKIIK…LVNKTLKQLG (71 aa)) are small ATPAse domain (RuvB-S). The segment at 242 to 315 (ENGLNESQVK…QKGISYLERI (74 aa)) is head domain (RuvB-H). Residues Lys-297 and Arg-302 each contribute to the DNA site.

Belongs to the RuvB family. Homohexamer. Forms an RuvA(8)-RuvB(12)-Holliday junction (HJ) complex. HJ DNA is sandwiched between 2 RuvA tetramers; dsDNA enters through RuvA and exits via RuvB. An RuvB hexamer assembles on each DNA strand where it exits the tetramer. Each RuvB hexamer is contacted by two RuvA subunits (via domain III) on 2 adjacent RuvB subunits; this complex drives branch migration. In the full resolvosome a probable DNA-RuvA(4)-RuvB(12)-RuvC(2) complex forms which resolves the HJ.

The protein resides in the cytoplasm. The enzyme catalyses ATP + H2O = ADP + phosphate + H(+). Functionally, the RuvA-RuvB-RuvC complex processes Holliday junction (HJ) DNA during genetic recombination and DNA repair, while the RuvA-RuvB complex plays an important role in the rescue of blocked DNA replication forks via replication fork reversal (RFR). RuvA specifically binds to HJ cruciform DNA, conferring on it an open structure. The RuvB hexamer acts as an ATP-dependent pump, pulling dsDNA into and through the RuvAB complex. RuvB forms 2 homohexamers on either side of HJ DNA bound by 1 or 2 RuvA tetramers; 4 subunits per hexamer contact DNA at a time. Coordinated motions by a converter formed by DNA-disengaged RuvB subunits stimulates ATP hydrolysis and nucleotide exchange. Immobilization of the converter enables RuvB to convert the ATP-contained energy into a lever motion, pulling 2 nucleotides of DNA out of the RuvA tetramer per ATP hydrolyzed, thus driving DNA branch migration. The RuvB motors rotate together with the DNA substrate, which together with the progressing nucleotide cycle form the mechanistic basis for DNA recombination by continuous HJ branch migration. Branch migration allows RuvC to scan DNA until it finds its consensus sequence, where it cleaves and resolves cruciform DNA. This Mycoplasmopsis pulmonis (strain UAB CTIP) (Mycoplasma pulmonis) protein is Holliday junction branch migration complex subunit RuvB.